The following is a 658-amino-acid chain: Trimethylamine N-oxide transport system permease protein TmoV (658 aa).

15 consecutive transmembrane segments (helical) span residues 20–40 (LGLAMIGLAVMMTLLHYAGLL), 103–123 (IGPIPWSAIAAMTAVVGYYLG), 127–147 (MALLAGGTFVWTAMIGQWDIA), 153–173 (VLVVAAPLAFAIGLVLGISAW), 185–205 (VLAVLQTLPFFTYLLPAVIFF), 212–232 (GAVATTVYAIPPMILMTTLGL), 273–293 (VIMLCLAMVVLTAFIGMPGLG), 300–320 (MGSFKIGRSFEIGVTIVLLAV), 349–369 (FLLMAIGAFVGFTLIAQVVPI), 420–440 (FMLSIPTVAFVLFISAAALLV), 447–467 (VLAAAFFGLVALTGWWDRSVI), 469–489 (LYSVLAAVSIALLLGVPIGVV), 517–537 (IPAIMLFGITATSVVMSILIF), 585–605 (AVGFNQAIMFAFFMVIIAAFI), and 627–647 (FVLGICVTLMALTFDMVIMKW). In terms of domain architecture, ABC transmembrane type-1 1 spans 147–326 (AMQTMSVLVV…LLAVTLDRMS (180 aa)). The 180-residue stretch at 465–644 (SVITLYSVLA…LMALTFDMVI (180 aa)) folds into the ABC transmembrane type-1 2 domain.

It belongs to the binding-protein-dependent transport system permease family. In terms of assembly, the complex is probably composed of two ATP-binding proteins (TmoW), two transmembrane proteins (TmoV) and a solute-binding protein (TmoX).

It localises to the cell inner membrane. Part of the ABC transporter complex TmoXWV involved in trimethylamine N-oxide (TMAO) import. Responsible for the translocation of the substrate across the membrane. Is specific for TMAO and essential for TMAO metabolism. The polypeptide is Trimethylamine N-oxide transport system permease protein TmoV (Ruegeria pomeroyi (strain ATCC 700808 / DSM 15171 / DSS-3) (Silicibacter pomeroyi)).